The sequence spans 115 residues: Androgen-binding protein homolog (115 aa).

Positions 1-23 (MKGTLLLLALLVTGELGFQTTEA) are cleaved as a signal peptide.

This sequence belongs to the secretoglobin family.

Its subcellular location is the secreted. This Mesocricetus auratus (Golden hamster) protein is Androgen-binding protein homolog.